We begin with the raw amino-acid sequence, 199 residues long: uncharacterized protein (199 aa).

6 consecutive transmembrane segments (helical) span residues 1–21, 28–48, 51–71, 83–103, 127–147, and 154–174; these read MEQFYYYWSMWFLWVLTTFIF, IAVSVFILTNIILSIHDIALY, LNAAYLMFFVCGCVYAGYLGM, LVAAYAFVYLFALYDPVWFII, QLVLFVLGMCQGELVYSFVIQ, and AVGGFQWLNACSAGMILLFGI.

The protein localises to the cell membrane. This is an uncharacterized protein from Bacillus subtilis (strain 168).